Here is a 277-residue protein sequence, read N- to C-terminus: Glycerol-3-phosphate acyltransferase (277 aa).

5 helical membrane-spanning segments follow: residues 3–23 (LFIF…AIIV), 55–75 (IMVM…AKFL), 79–99 (PVTV…PVFF), 111–131 (IGAL…TWLL), and 155–175 (LILV…ILVL). The segment at 207–277 (SPATSAEQEF…PKTKTVKEKE (71 aa)) is disordered. Residues 216 to 239 (FPGKEVIDTNIDETEKTEQAEAVK) show a composition bias toward basic and acidic residues. Composition is skewed to basic residues over residues 240-253 (KPKV…AKKT) and 262-271 (KPKSTKPKTK).

Belongs to the PlsY family. In terms of assembly, probably interacts with PlsX.

It localises to the cell inner membrane. The enzyme catalyses an acyl phosphate + sn-glycerol 3-phosphate = a 1-acyl-sn-glycero-3-phosphate + phosphate. Its pathway is lipid metabolism; phospholipid metabolism. Its function is as follows. Catalyzes the transfer of an acyl group from acyl-phosphate (acyl-PO(4)) to glycerol-3-phosphate (G3P) to form lysophosphatidic acid (LPA). This enzyme utilizes acyl-phosphate as fatty acyl donor, but not acyl-CoA or acyl-ACP. This chain is Glycerol-3-phosphate acyltransferase, found in Legionella pneumophila subsp. pneumophila (strain Philadelphia 1 / ATCC 33152 / DSM 7513).